The sequence spans 393 residues: Small RNA 2'-O-methyltransferase (393 aa).

S-adenosyl-L-methionine is bound by residues tyrosine 36, glycine 55, aspartate 78, lysine 83, valine 115, and isoleucine 131. Positions 132, 135, 136, and 181 each coordinate Mg(2+). Residues 286 to 307 (HLPRRKEQAGERGDKPKDIGGS) are disordered. A compositionally biased stretch (basic and acidic residues) spans 290–305 (RKEQAGERGDKPKDIG).

Belongs to the methyltransferase superfamily. HEN1 family. Mg(2+) serves as cofactor.

Its subcellular location is the cytoplasm. It catalyses the reaction small RNA 3'-end nucleotide + S-adenosyl-L-methionine = small RNA 3'-end 2'-O-methylnucleotide + S-adenosyl-L-homocysteine + H(+). Functionally, methyltransferase that adds a 2'-O-methyl group at the 3'-end of piRNAs, a class of 24 to 30 nucleotide RNAs that are generated by a Dicer-independent mechanism and are primarily derived from transposons and other repeated sequence elements. This probably protects the 3'-end of piRNAs from uridylation activity and subsequent degradation. Stabilization of piRNAs is essential for gametogenesis. The protein is Small RNA 2'-O-methyltransferase (HENMT1) of Homo sapiens (Human).